Here is a 596-residue protein sequence, read N- to C-terminus: Mitoguardin 2 (596 aa).

The next 2 helical transmembrane spans lie at 11-31 (IMQA…STFG) and 40-60 (LSPS…ALAL). Disordered regions lie at residues 67–158 (RRGR…AAWE) and 576–596 (ALPK…GQQD). The segment covering 110 to 123 (MSPSTRSNDTLSGV) has biased composition (polar residues). Over residues 124-140 (SSIAQSKHSSSSHSIAS) the composition is skewed to low complexity. 2 stretches are compositionally biased toward polar residues: residues 143-152 (VPSSPNQSVN) and 583-596 (QAES…GQQD).

It belongs to the mitoguardin family. Homodimer and heterodimer; forms heterodimers with miga1.

The protein localises to the mitochondrion outer membrane. Its function is as follows. Regulator of mitochondrial fusion: acts by forming homo- and heterodimers at the mitochondrial outer membrane and facilitating the formation of pld6/MitoPLD dimers. May act by regulating phospholipid metabolism via pld6/MitoPLD. In Danio rerio (Zebrafish), this protein is Mitoguardin 2.